Here is a 571-residue protein sequence, read N- to C-terminus: Probable serine/threonine-protein kinase WNK4 (571 aa).

The region spanning 19–277 (GRFAEILGRG…AKELLQDPFL (259 aa)) is the Protein kinase domain. ATP contacts are provided by residues 99 to 102 (TELF) and K149. The Proton acceptor role is filled by D166. The interval 396 to 425 (EDDETPHDHHRHRTDSFHSSSSHASSSQAS) is disordered. The span at 412–425 (FHSSSSHASSSQAS) shows a compositional bias: low complexity. S522 bears the Phosphoserine mark.

It belongs to the protein kinase superfamily. Ser/Thr protein kinase family. WNK subfamily.

It carries out the reaction L-seryl-[protein] + ATP = O-phospho-L-seryl-[protein] + ADP + H(+). The catalysed reaction is L-threonyl-[protein] + ATP = O-phospho-L-threonyl-[protein] + ADP + H(+). Its function is as follows. May regulate flowering time by modulating the photoperiod pathway. The polypeptide is Probable serine/threonine-protein kinase WNK4 (WNK4) (Arabidopsis thaliana (Mouse-ear cress)).